We begin with the raw amino-acid sequence, 394 residues long: Quinolinate synthase (394 aa).

Positions 57 and 74 each coordinate iminosuccinate. Residue cysteine 121 participates in [4Fe-4S] cluster binding. Residues 153–155 and serine 174 each bind iminosuccinate; that span reads YMN. Cysteine 243 serves as a coordination point for [4Fe-4S] cluster. Residues 269–271 and threonine 286 contribute to the iminosuccinate site; that span reads HPE. Residue cysteine 333 participates in [4Fe-4S] cluster binding.

Belongs to the quinolinate synthase family. Type 3 subfamily. It depends on [4Fe-4S] cluster as a cofactor.

Its subcellular location is the cytoplasm. The enzyme catalyses iminosuccinate + dihydroxyacetone phosphate = quinolinate + phosphate + 2 H2O + H(+). It functions in the pathway cofactor biosynthesis; NAD(+) biosynthesis; quinolinate from iminoaspartate: step 1/1. In terms of biological role, catalyzes the condensation of iminoaspartate with dihydroxyacetone phosphate to form quinolinate. The chain is Quinolinate synthase from Corynebacterium glutamicum (strain ATCC 13032 / DSM 20300 / JCM 1318 / BCRC 11384 / CCUG 27702 / LMG 3730 / NBRC 12168 / NCIMB 10025 / NRRL B-2784 / 534).